The sequence spans 155 residues: MSDKEMNVESFNLDHTKVKAPYVRLAGIKTGDHGDAIHKYDLRICQPNKAHMEMPALHSLEHLMAELSRNHTDKMLDISPMGCQTGFYVTLINHDDYDDVLDLIDKTLNDVLVAKEVPACNEMQCGWAASHSLEGAQALARDLLAKRNEWNQVFA.

Positions 58, 62, and 125 each coordinate Fe cation.

This sequence belongs to the LuxS family. Homodimer. Fe cation serves as cofactor.

It carries out the reaction S-(5-deoxy-D-ribos-5-yl)-L-homocysteine = (S)-4,5-dihydroxypentane-2,3-dione + L-homocysteine. Involved in the synthesis of autoinducer 2 (AI-2) which is secreted by bacteria and is used to communicate both the cell density and the metabolic potential of the environment. The regulation of gene expression in response to changes in cell density is called quorum sensing. Catalyzes the transformation of S-ribosylhomocysteine (RHC) to homocysteine (HC) and 4,5-dihydroxy-2,3-pentadione (DPD). This is S-ribosylhomocysteine lyase from Chromohalobacter salexigens (strain ATCC BAA-138 / DSM 3043 / CIP 106854 / NCIMB 13768 / 1H11).